Reading from the N-terminus, the 228-residue chain is Endonuclease V (228 aa).

Mg(2+) is bound by residues Asp43 and Asp109.

The protein belongs to the endonuclease V family. It depends on Mg(2+) as a cofactor.

It localises to the cytoplasm. The catalysed reaction is Endonucleolytic cleavage at apurinic or apyrimidinic sites to products with a 5'-phosphate.. DNA repair enzyme involved in the repair of deaminated bases. Selectively cleaves double-stranded DNA at the second phosphodiester bond 3' to a deoxyinosine leaving behind the intact lesion on the nicked DNA. The sequence is that of Endonuclease V from Dictyoglomus thermophilum (strain ATCC 35947 / DSM 3960 / H-6-12).